The following is a 232-amino-acid chain: Ornithine carbamoyltransferase (232 aa).

Carbamoyl phosphate-binding positions include Gln-15, Arg-39, and 66-69 (HPTQ). L-ornithine is bound by residues Asn-99, Asp-163, and 167–168 (SM). Carbamoyl phosphate contacts are provided by residues 204-207 (HCLP) and Thr-232.

The protein belongs to the aspartate/ornithine carbamoyltransferase superfamily. OTCase family.

Its subcellular location is the cytoplasm. The enzyme catalyses carbamoyl phosphate + L-ornithine = L-citrulline + phosphate + H(+). It participates in amino-acid biosynthesis; L-arginine biosynthesis; L-arginine from L-ornithine and carbamoyl phosphate: step 1/3. Reversibly catalyzes the transfer of the carbamoyl group from carbamoyl phosphate (CP) to the N(epsilon) atom of ornithine (ORN) to produce L-citrulline. The sequence is that of Ornithine carbamoyltransferase (argF) from Neisseria sicca.